The following is a 216-amino-acid chain: LexA repressor 1 (216 aa).

A DNA-binding region (H-T-H motif) is located at residues 38-58; that stretch reads TRQIGAAVGLRSMSSVARHLR. Active-site for autocatalytic cleavage activity residues include serine 140 and lysine 177.

The protein belongs to the peptidase S24 family. As to quaternary structure, homodimer.

The enzyme catalyses Hydrolysis of Ala-|-Gly bond in repressor LexA.. Functionally, represses a number of genes involved in the response to DNA damage (SOS response), including recA and lexA. In the presence of single-stranded DNA, RecA interacts with LexA causing an autocatalytic cleavage which disrupts the DNA-binding part of LexA, leading to derepression of the SOS regulon and eventually DNA repair. This Nocardia farcinica (strain IFM 10152) protein is LexA repressor 1.